An 814-amino-acid chain; its full sequence is Lon protease (814 aa).

Residues 1-20 (MANEAHNIEHTDPEFRDDSA) form a disordered region. Positions 25–219 (LPLLPVRDTV…KINQHLAKEL (195 aa)) constitute a Lon N-terminal domain. 372–379 (GPPGVGKT) is an ATP binding site. The region spanning 610–792 (TKRAGVVVGL…DEVLEIALPS (183 aa)) is the Lon proteolytic domain. Residues Ser697 and Lys740 contribute to the active site.

The protein belongs to the peptidase S16 family. As to quaternary structure, homohexamer. Organized in a ring with a central cavity.

Its subcellular location is the cytoplasm. The catalysed reaction is Hydrolysis of proteins in presence of ATP.. Its function is as follows. ATP-dependent serine protease that mediates the selective degradation of mutant and abnormal proteins as well as certain short-lived regulatory proteins. Required for cellular homeostasis and for survival from DNA damage and developmental changes induced by stress. Degrades polypeptides processively to yield small peptide fragments that are 5 to 10 amino acids long. Binds to DNA in a double-stranded, site-specific manner. The polypeptide is Lon protease (Koribacter versatilis (strain Ellin345)).